A 501-amino-acid chain; its full sequence is uncharacterized protein (501 aa).

The active-site Proton donor is the E236. E333 acts as the Nucleophile in catalysis.

Belongs to the glycosyl hydrolase 5 (cellulase A) family.

It is found in the mitochondrion intermembrane space. This is an uncharacterized protein from Saccharomyces cerevisiae (strain ATCC 204508 / S288c) (Baker's yeast).